We begin with the raw amino-acid sequence, 141 residues long: Cystatin (141 aa).

A signal peptide spans 1-26 (MVHSQLPVAGPLRLLCALLLLPSATM). The 101-residue stretch at 29–129 (GGLSPRSVTD…CHFQVWSRPW (101 aa)) folds into the Cystatin domain. Positions 73–77 (QVVSG) match the Secondary area of contact motif. 2 cysteine pairs are disulfide-bonded: cysteine 91-cysteine 107 and cysteine 120-cysteine 140.

Belongs to the cystatin family. As to expression, expressed at a low level by the venom gland (at protein level).

It localises to the secreted. Functionally, inhibits various C1 cysteine proteases including cathepsin L, papain and cathepsin B. This protein has no toxic activity and its function in the venom is unknown. It may play a role as a housekeeping or regulatory protein. The sequence is that of Cystatin from Pseudechis australis (Mulga snake).